The sequence spans 505 residues: Maturase K (505 aa).

The protein belongs to the intron maturase 2 family. MatK subfamily.

It localises to the plastid. The protein localises to the chloroplast. Usually encoded in the trnK tRNA gene intron. Probably assists in splicing its own and other chloroplast group II introns. The chain is Maturase K from Ficus carica (Common fig).